Here is a 256-residue protein sequence, read N- to C-terminus: Trans-aconitate 2-methyltransferase (256 aa).

Belongs to the methyltransferase superfamily. Tam family.

Its subcellular location is the cytoplasm. It catalyses the reaction trans-aconitate + S-adenosyl-L-methionine = (E)-3-(methoxycarbonyl)pent-2-enedioate + S-adenosyl-L-homocysteine. Functionally, catalyzes the S-adenosylmethionine monomethyl esterification of trans-aconitate. This is Trans-aconitate 2-methyltransferase from Rhizobium leguminosarum bv. trifolii (strain WSM2304).